Consider the following 472-residue polypeptide: Protein translocase subunit SecD (472 aa).

The next 6 helical transmembrane spans lie at 8-28 (ILFTVIVFVFALLGLILPLSG), 300-320 (TIINAGIIGLIIVMIYMIIFY), 325-347 (VIADIALIYNTFLLMGILSWTGA), 353-375 (GIAGIILTFGTTVDGNIIIYERI), 396-416 (VFSTIFDANITTILAGLVLFF), and 424-444 (GFAVTLIIGVLGAMFTNLVVS).

This sequence belongs to the SecD/SecF family. SecD subfamily. In terms of assembly, forms a complex with SecF. Part of the essential Sec protein translocation apparatus which comprises SecA, SecYEG and auxiliary proteins SecDF. Other proteins may also be involved.

Its subcellular location is the cell inner membrane. Functionally, part of the Sec protein translocase complex. Interacts with the SecYEG preprotein conducting channel. SecDF uses the proton motive force (PMF) to complete protein translocation after the ATP-dependent function of SecA. The protein is Protein translocase subunit SecD of Petrotoga mobilis (strain DSM 10674 / SJ95).